Reading from the N-terminus, the 1522-residue chain is Sodium channel protein 1 brain (1522 aa).

The Cytoplasmic portion of the chain corresponds to 1 to 50; the sequence is MDEKYTAKNRDKTFVVIEKRFKKNIIHRFSAKRSLFLFTPRNPIRRLAVC. Residues 41–342 form an I repeat; it reads RNPIRRLAVC…VATAYELEVK (302 aa). A helical membrane pass occupies residues 51 to 70; sequence IATNVCFDYFLMFTIMINCV. Topologically, residues 71-77 are extracellular; sequence FLAMPDI. A helical membrane pass occupies residues 78 to 99; it reads SEFAEYIFLGIYTMEMAIKLVA. At 100–112 the chain is on the cytoplasmic side; sequence GGFFIDKYTYLRD. The helical transmembrane segment at 113–134 threads the bilayer; that stretch reads AWNCLDFTVIMISYITLLLQTI. The Extracellular portion of the chain corresponds to 135–143; it reads NDKVISDIT. A helical; Voltage-sensor transmembrane segment spans residues 144-167; the sequence is GLRTFRVLRALRTLSIIPGLKTMV. Topologically, residues 168-179 are cytoplasmic; sequence NALLRALRMLIS. Residues 180 to 201 traverse the membrane as a helical segment; sequence VLILILFCLWIFSQAGVQLFGG. Over 202 to 278 the chain is Extracellular; sequence ALRHKCVLQI…PNYGYTNFDS (77 aa). C207 and C255 are oxidised to a cystine. N248 and N258 each carry an N-linked (GlcNAc...) asparagine glycan. An intramembrane region (pore-forming) is located at residues 279–303; it reads IGWSMLISFQLLTQDYWEDVYNKVI. The Extracellular portion of the chain corresponds to 304 to 308; that stretch reads RAHSP. The helical transmembrane segment at 309–331 threads the bilayer; the sequence is WTVIYFIVINFFGSLYLMNLMLA. Topologically, residues 332 to 406 are cytoplasmic; that stretch reads VVATAYELEV…WLRVQSFAHC (75 aa). An II repeat occupies 393–647; it reads CYNPWLRVQS…EQEVEVSSFA (255 aa). A helical membrane pass occupies residues 407–426; sequence IITDSFTEVFIIFIIVLNTV. At 427–442 the chain is on the extracellular side; sequence FLAMEHHGMSMELKNV. A helical transmembrane segment spans residues 443 to 464; it reads LKVANYVFTTVFVLEAILKLLA. Residues 465–472 are Cytoplasmic-facing; the sequence is FNKQYFKS. Residues 473–491 form a helical membrane-spanning segment; sequence GWNICDLVVVVASLIDLGV. The Extracellular portion of the chain corresponds to 492–498; that stretch reads EGLKGVS. Residues 499 to 522 traverse the membrane as a helical; Voltage-sensor segment; the sequence is VFRSFRLLRVFHLAQSWTTMRLLL. Residues 523 to 531 lie on the Cytoplasmic side of the membrane; sequence CIILNTLGS. Residues 532 to 553 form a helical membrane-spanning segment; the sequence is LGYLTIILIIVIYIFAVTGLQL. The Extracellular portion of the chain corresponds to 554–575; sequence FHTEYTPDKFRGEPVPRWNFND. An intramembrane region (pore-forming) is located at residues 576 to 596; sequence FLHSFMMVFRILCGEWIEPMY. At 597-607 the chain is on the extracellular side; the sequence is DCMRACNGLCF. A disulfide bridge links C598 with C606. The helical transmembrane segment at 608–628 threads the bilayer; the sequence is LIFIPVTVFGKTLFFLFIGLV. At 629–777 the chain is on the cytoplasmic side; sequence LGAFGSDTVE…WNNFRRQLMM (149 aa). The stretch at 770 to 1074 is one III repeat; it reads NFRRQLMMVC…QNYYNTLKKL (305 aa). Residues 778 to 797 form a helical membrane-spanning segment; it reads VCENKYFETGVLVIIFASSI. At 798-815 the chain is on the extracellular side; sequence LLAFEDIYLNEKPRLKLA. Residues 816-837 traverse the membrane as a helical segment; sequence IFYLDITFCLLFFLEMVLKLVA. The Cytoplasmic segment spans residues 838-846; sequence LGFVHYYTH. The helical transmembrane segment at 847-868 threads the bilayer; sequence FWTILDFTIVIITVISLAASGL. The Extracellular portion of the chain corresponds to 869–874; sequence GMEQIT. Residues 875–898 form a helical; Voltage-sensor membrane-spanning segment; sequence AFRSLRTLRALRPLRAVSRWQGMK. Over 899 to 915 the chain is Cytoplasmic; it reads IIVNALMLSIPSIFNVL. Residues 916 to 937 form a helical membrane-spanning segment; the sequence is LVCVVFWLIFAIMGVQLFAGKF. The Extracellular segment spans residues 938–976; the sequence is YKCVNETNMRIPPTEVANKIECYNKNYTWVNSNVNFDNV. Residues N942 and N963 are each glycosylated (N-linked (GlcNAc...) asparagine). Positions 977–998 form an intramembrane region, pore-forming; the sequence is GGAFLALFQVATFEGWMEIMAD. The Extracellular portion of the chain corresponds to 999 to 1009; sequence AVDVTEVDEQP. A helical membrane pass occupies residues 1010 to 1022; the sequence is KFEATVYYYFYFV. At 1023–1100 the chain is on the cytoplasmic side; the sequence is LFIIFGSFFV…QAVVYDLVMS (78 aa). Position 1076 is a phosphothreonine; by PKC (T1076). The stretch at 1083 to 1386 is one IV repeat; sequence VKRPKNKCQA…WEQYDPLATQ (304 aa). A helical membrane pass occupies residues 1101–1120; the sequence is NQFEIFITTIIITNMIFMAF. Over 1121-1132 the chain is Extracellular; the sequence is EHYNQSEVVTEV. A glycan (N-linked (GlcNAc...) asparagine) is linked at N1124. Residues 1133–1154 form a helical membrane-spanning segment; sequence LATANIAFTILYAVEAIIKIIG. Residues 1155–1162 are Cytoplasmic-facing; sequence LRIHYLRN. Residues 1163–1184 form a helical membrane-spanning segment; it reads LWNVFDFLVVTLSVMDAFLNDI. The Extracellular segment spans residues 1185 to 1194; that stretch reads FGDGIFMNPS. The helical; Voltage-sensor transmembrane segment at 1195 to 1218 threads the bilayer; sequence LLRVARMFRIGRIIRLIKWAKGMR. The Cytoplasmic portion of the chain corresponds to 1219–1236; sequence KLLFALVISLPALFNIGA. A helical transmembrane segment spans residues 1237-1258; it reads LLMLVMFIYTIIGMSSFGQIKL. Topologically, residues 1259 to 1270 are extracellular; sequence SGALNDQVNFQT. An intramembrane region (pore-forming) is located at residues 1271–1293; the sequence is FGKTFLLLVRLATSAGWNDILGP. Residues 1294–1323 are Extracellular-facing; sequence LLIQPPNCDPNYITTSTGEKIKVVNGDCGM. A helical transmembrane segment spans residues 1324–1346; it reads PWLAISYMVSYIIIVFMIVFNMY. At 1347–1522 the chain is on the cytoplasmic side; sequence IAVILENFNQ…FIISAPETAV (176 aa).

It belongs to the sodium channel (TC 1.A.1.10) family.

It is found in the cell membrane. Its function is as follows. Mediates the voltage-dependent sodium ion permeability of excitable membranes. Assuming opened or closed conformations in response to the voltage difference across the membrane, the protein forms a sodium-selective channel through which Na(+) ions may pass in accordance with their electrochemical gradient. The sequence is that of Sodium channel protein 1 brain from Heterololigo bleekeri (Spear squid).